Consider the following 479-residue polypeptide: UDP-N-acetylmuramoyl-L-alanyl-D-glutamate--2,6-diaminopimelate ligase (479 aa).

Ser21 lines the UDP-N-acetyl-alpha-D-muramoyl-L-alanyl-D-glutamate pocket. Residue 98 to 104 (GTNGKSS) participates in ATP binding. UDP-N-acetyl-alpha-D-muramoyl-L-alanyl-D-glutamate is bound by residues 144 to 145 (TT), Ser171, Gln177, and Arg179. Lys211 carries the post-translational modification N6-carboxylysine. Meso-2,6-diaminopimelate-binding positions include Arg372, 396–399 (DNPR), Gly446, and Glu450. Residues 396-399 (DNPR) carry the Meso-diaminopimelate recognition motif motif.

Belongs to the MurCDEF family. MurE subfamily. Requires Mg(2+) as cofactor. Carboxylation is probably crucial for Mg(2+) binding and, consequently, for the gamma-phosphate positioning of ATP.

It localises to the cytoplasm. It catalyses the reaction UDP-N-acetyl-alpha-D-muramoyl-L-alanyl-D-glutamate + meso-2,6-diaminopimelate + ATP = UDP-N-acetyl-alpha-D-muramoyl-L-alanyl-gamma-D-glutamyl-meso-2,6-diaminopimelate + ADP + phosphate + H(+). Its pathway is cell wall biogenesis; peptidoglycan biosynthesis. Its function is as follows. Catalyzes the addition of meso-diaminopimelic acid to the nucleotide precursor UDP-N-acetylmuramoyl-L-alanyl-D-glutamate (UMAG) in the biosynthesis of bacterial cell-wall peptidoglycan. The chain is UDP-N-acetylmuramoyl-L-alanyl-D-glutamate--2,6-diaminopimelate ligase from Rickettsia conorii (strain ATCC VR-613 / Malish 7).